A 285-amino-acid polypeptide reads, in one-letter code: Urease accessory protein UreD (285 aa).

This sequence belongs to the UreD family. As to quaternary structure, ureD, UreF and UreG form a complex that acts as a GTP-hydrolysis-dependent molecular chaperone, activating the urease apoprotein by helping to assemble the nickel containing metallocenter of UreC. The UreE protein probably delivers the nickel.

The protein localises to the cytoplasm. Functionally, required for maturation of urease via the functional incorporation of the urease nickel metallocenter. This chain is Urease accessory protein UreD, found in Cenarchaeum symbiosum (strain A).